Here is a 150-residue protein sequence, read N- to C-terminus: Large ribosomal subunit protein bL9 (150 aa).

It belongs to the bacterial ribosomal protein bL9 family.

Its function is as follows. Binds to the 23S rRNA. The polypeptide is Large ribosomal subunit protein bL9 (Ralstonia nicotianae (strain ATCC BAA-1114 / GMI1000) (Ralstonia solanacearum)).